Here is a 78-residue protein sequence, read N- to C-terminus: UPF0291 protein SE_1024 (78 aa).

The interval 53-78 is disordered; that stretch reads TKVIDPEGNDVTPEKLKKIQEEKHNK. The span at 64 to 78 shows a compositional bias: basic and acidic residues; that stretch reads TPEKLKKIQEEKHNK.

Belongs to the UPF0291 family.

The protein resides in the cytoplasm. The protein is UPF0291 protein SE_1024 of Staphylococcus epidermidis (strain ATCC 12228 / FDA PCI 1200).